The primary structure comprises 546 residues: Immunoglobulin-like domain-containing receptor 1 (546 aa).

Positions 1 to 23 (MAWPKLPAPWLLLCTWLPAGCLS) are cleaved as a signal peptide. One can recognise an Ig-like V-type domain in the interval 24–162 (LLVTVQHTER…TSGDPDKEVK (139 aa)). Over 24 to 167 (LLVTVQHTER…DKEVKLIVLH (144 aa)) the chain is Extracellular. Cys45 and Cys145 form a disulfide bridge. A helical membrane pass occupies residues 168–188 (WLTVIFIILGALLLLLLIGVC). Residues 189–546 (WCQCCPQYCC…SSHSGRSVVI (358 aa)) are Cytoplasmic-facing. The tract at residues 399 to 546 (WSGRHRSSRL…SSHSGRSVVI (148 aa)) is disordered. Residues 442–457 (RCQERPRRPSPRESTQ) are compositionally biased toward basic and acidic residues. Positions 458–467 (RHGRRRRHRS) are enriched in basic residues. Phosphoserine is present on residues Ser499 and Ser501. Residues 527–539 (GSVERRSEKDSSH) show a composition bias toward basic and acidic residues.

The protein belongs to the immunoglobulin superfamily. LISCH7 family. In terms of assembly, homooligomer. Interacts with MARVELD2 and OCLN; the interaction is required to recruit MARVELD2 to tricellular contacts. Interacts (via C-terminus) with TRA2A, TRA2B and SRSF1. Interacts with PLSCR1.

It localises to the cell membrane. The protein localises to the cell junction. Its subcellular location is the tight junction. The protein resides in the nucleus. It is found in the cytoplasm. Functionally, maintains epithelial barrier function by recruiting MARVELD2/tricellulin to tricellular tight junctions (tTJs). Crucial for normal hearing by maintaining the structural and functional integrity of tTJs, which are critical for the survival of auditory neurosensory HCs. Mediates fatty acids and lipoproteins-stimulated CCK/cholecystokinin secretion in the small intestine. In the inner ear, may regulate alternative pre-mRNA splicing via binding to TRA2A, TRA2B and SRSF1. The protein is Immunoglobulin-like domain-containing receptor 1 (ILDR1) of Pongo abelii (Sumatran orangutan).